The sequence spans 418 residues: Actin-related protein 3 (418 aa).

Ala-2 is modified (N-acetylalanine). An N6-acetyllysine mark is found at Lys-240, Lys-244, Lys-251, and Lys-254.

The protein belongs to the actin family. ARP3 subfamily. Component of the Arp2/3 complex composed of ACTR2/ARP2, ACTR3/ARP3, ARPC1B/p41-ARC, ARPC2/p34-ARC, ARPC3/p21-ARC, ARPC4/p20-ARC and ARPC5/p16-ARC. Interacts with WHDC1. Interacts weakly with MEFV. Interacts with AVIL.

The protein resides in the cytoplasm. It localises to the cytoskeleton. Its subcellular location is the cell projection. It is found in the nucleus. Functionally, ATP-binding component of the Arp2/3 complex, a multiprotein complex that mediates actin polymerization upon stimulation by nucleation-promoting factor (NPF). The Arp2/3 complex mediates the formation of branched actin networks in the cytoplasm, providing the force for cell motility. Seems to contact the pointed end of the daughter actin filament. In podocytes, required for the formation of lamellipodia downstream of AVIL and PLCE1 regulation. In addition to its role in the cytoplasmic cytoskeleton, the Arp2/3 complex also promotes actin polymerization in the nucleus, thereby regulating gene transcription and repair of damaged DNA. The Arp2/3 complex promotes homologous recombination (HR) repair in response to DNA damage by promoting nuclear actin polymerization, leading to drive motility of double-strand breaks (DSBs). Plays a role in ciliogenesis. This Bos taurus (Bovine) protein is Actin-related protein 3 (ACTR3).